The sequence spans 66 residues: Large ribosomal subunit protein bL33c (66 aa).

It belongs to the bacterial ribosomal protein bL33 family.

It is found in the plastid. It localises to the chloroplast. In Barbarea verna (Land cress), this protein is Large ribosomal subunit protein bL33c.